Consider the following 238-residue polypeptide: CD63 antigen (238 aa).

Over 1 to 11 (MAVEGGMKCVK) the chain is Cytoplasmic. A helical membrane pass occupies residues 12 to 32 (FLLYVLLLAFCACAVGLIAVG). Topologically, residues 33-51 (VGAQLVLSQTITHGATPGS) are extracellular. The chain crosses the membrane as a helical span at residues 52–72 (LLPVVIIAVGAFLFLVAFVGC). Residues 73 to 81 (CGTCKENYC) lie on the Cytoplasmic side of the membrane. The helical transmembrane segment at 82-102 (LMITFAIFLSLIMLVEVAAAI) threads the bilayer. The Extracellular segment spans residues 103–203 (AGYVFRDKVM…KIGLWLRKNV (101 aa)). Residues N125, N130, N150, and N172 are each glycosylated (N-linked (GlcNAc...) asparagine). Residues 204-224 (LVVAAAALGIAFVEVLGIVFA) traverse the membrane as a helical segment. Residues 225–238 (CCLVKSIRSGYEVM) lie on the Cytoplasmic side of the membrane. The short motif at 234-238 (GYEVM) is the Lysosomal targeting motif element.

This sequence belongs to the tetraspanin (TM4SF) family. As to quaternary structure, interacts with TIMP1 and ITGB1 and recruits TIMP1 to ITGB1. Interacts with CD9. Identified in a complex with CD9 and ITGB3. Interacts with PMEL. Interacts with KDR/VEGFR2; identified in a complex with ITGB1 and KDR/VEGFR2 and is required to recruit KDR to ITGB1 complexes. Interacts with SYT7. Post-translationally, palmitoylated at a low, basal level in unstimulated platelets. The level of palmitoylation increases when platelets are activated by thrombin (in vitro).

The protein resides in the cell membrane. Its subcellular location is the lysosome membrane. The protein localises to the late endosome membrane. It localises to the endosome. It is found in the multivesicular body. The protein resides in the melanosome. Its subcellular location is the secreted. The protein localises to the extracellular exosome. It localises to the cell surface. Functions as a cell surface receptor for TIMP1 and plays a role in the activation of cellular signaling cascades. Plays a role in the activation of ITGB1 and integrin signaling, leading to the activation of AKT, FAK/PTK2 and MAP kinases. Promotes cell survival, reorganization of the actin cytoskeleton, cell adhesion, spreading and migration, via its role in the activation of AKT and FAK/PTK2. Plays a role in VEGFA signaling via its role in regulating the internalization of KDR/VEGFR2. Plays a role in intracellular vesicular transport processes, and is required for normal trafficking of the PMEL luminal domain that is essential for the development and maturation of melanocytes. Plays a role in the adhesion of leukocytes onto endothelial cells via its role in the regulation of SELP trafficking. May play a role in mast cell degranulation in response to Ms4a2/FceRI stimulation, but not in mast cell degranulation in response to other stimuli. This chain is CD63 antigen (CD63), found in Oryctolagus cuniculus (Rabbit).